A 441-amino-acid polypeptide reads, in one-letter code: MAGUK p55 subfamily member 4 (441 aa).

Positions 1 to 84 (MRTVCLVKNQ…TIMFKVIPVS (84 aa)) constitute a PDZ domain. An SH3 domain is found at 91-161 (QTTVYVRAMI…PSNHLLKRKQ (71 aa)). In terms of domain architecture, Guanylate kinase-like spans 232-421 (HRLIVLVGPS…ARAQLLSAIQ (190 aa)). Residues 373 to 430 (VDMKFKDEDLQEMEELAQKMESQFGQFFDHVIVNDNLQDARAQLLSAIQKAEEELQWV) are a coiled coil.

The protein belongs to the MAGUK family. As to quaternary structure, interacts with MPDZ. May interact with GRIA2. Forms a complex with CRB1 and PALS1. Interacts with FASLG. In terms of tissue distribution, highly expressed in brain and detected in lung, and bone (at protein level). Also expressed in intestine and spleen.

Its subcellular location is the cytoplasm. In terms of biological role, may play a role in retinal photoreceptors development. The chain is MAGUK p55 subfamily member 4 (Mpp4) from Rattus norvegicus (Rat).